A 263-amino-acid polypeptide reads, in one-letter code: Purine nucleoside phosphorylase SACOL1200 (263 aa).

The Zn(2+) site is built by H79, C124, and H141.

Belongs to the purine nucleoside phosphorylase YfiH/LACC1 family. As to quaternary structure, homodimer. Requires Cu(2+) as cofactor. The cofactor is Zn(2+).

It carries out the reaction adenosine + phosphate = alpha-D-ribose 1-phosphate + adenine. The catalysed reaction is S-methyl-5'-thioadenosine + phosphate = 5-(methylsulfanyl)-alpha-D-ribose 1-phosphate + adenine. It catalyses the reaction inosine + phosphate = alpha-D-ribose 1-phosphate + hypoxanthine. The enzyme catalyses adenosine + H2O + H(+) = inosine + NH4(+). Functionally, purine nucleoside enzyme that catalyzes the phosphorolysis of adenosine and inosine nucleosides, yielding D-ribose 1-phosphate and the respective free bases, adenine and hypoxanthine. Also catalyzes the phosphorolysis of S-methyl-5'-thioadenosine into adenine and S-methyl-5-thio-alpha-D-ribose 1-phosphate. Also has adenosine deaminase activity. In Staphylococcus aureus (strain COL), this protein is Purine nucleoside phosphorylase SACOL1200.